A 1786-amino-acid chain; its full sequence is Laminin subunit beta-1 (1786 aa).

The N-terminal stretch at 1–21 (MGLLQVFAFGVLALWGTRVCA) is a signal peptide. Positions 31-270 (AEGSCYPATG…AVYDMVVRGN (240 aa)) constitute a Laminin N-terminal domain. An N-linked (GlcNAc...) asparagine glycan is attached at asparagine 120. Residue serine 250 is modified to Phosphoserine. Disulfide bonds link cysteine 271-cysteine 280, cysteine 273-cysteine 298, cysteine 300-cysteine 309, cysteine 312-cysteine 332, cysteine 335-cysteine 344, cysteine 337-cysteine 362, cysteine 365-cysteine 374, cysteine 377-cysteine 395, cysteine 398-cysteine 411, cysteine 400-cysteine 426, cysteine 428-cysteine 437, cysteine 440-cysteine 455, cysteine 458-cysteine 472, cysteine 460-cysteine 479, cysteine 481-cysteine 490, cysteine 493-cysteine 507, cysteine 510-cysteine 522, cysteine 512-cysteine 529, and cysteine 531-cysteine 540. 4 Laminin EGF-like domains span residues 271 to 334 (CFCY…ACKK), 335 to 397 (CNCN…LCEP), 398 to 457 (CTCD…GCKS), and 458 to 509 (CACN…GCRP). N-linked (GlcNAc...) asparagine glycosylation occurs at asparagine 356. The Laminin EGF-like 5; truncated domain maps to 510-540 (CDCDLGGALNNSCSEDSGQCSCLPHMIGRQC). An N-linked (GlcNAc...) asparagine glycan is attached at asparagine 519. The 219-residue stretch at 549-767 (FTTLDHYIYE…IIFSISALIH (219 aa)) folds into the Laminin IV type B domain. A glycan (N-linked (GlcNAc...) asparagine) is linked at asparagine 677. 32 cysteine pairs are disulfide-bonded: cysteine 773–cysteine 785, cysteine 775–cysteine 792, cysteine 794–cysteine 803, cysteine 806–cysteine 818, cysteine 821–cysteine 833, cysteine 823–cysteine 840, cysteine 842–cysteine 851, cysteine 854–cysteine 864, cysteine 867–cysteine 876, cysteine 869–cysteine 883, cysteine 886–cysteine 895, cysteine 898–cysteine 914, cysteine 917–cysteine 933, cysteine 919–cysteine 944, cysteine 946–cysteine 955, cysteine 958–cysteine 973, cysteine 976–cysteine 990, cysteine 978–cysteine 997, cysteine 1000–cysteine 1009, cysteine 1012–cysteine 1025, cysteine 1028–cysteine 1040, cysteine 1030–cysteine 1054, cysteine 1056–cysteine 1065, cysteine 1068–cysteine 1081, cysteine 1084–cysteine 1096, cysteine 1086–cysteine 1103, cysteine 1105–cysteine 1114, cysteine 1117–cysteine 1129, cysteine 1132–cysteine 1144, cysteine 1134–cysteine 1151, cysteine 1153–cysteine 1162, and cysteine 1165–cysteine 1176. 8 consecutive Laminin EGF-like domains span residues 773 to 820 (CECD…GCKP), 821 to 866 (CDCH…SCQP), 867 to 916 (CQCN…HCRP), 917 to 975 (CPCP…SCQP), 976 to 1027 (CQCH…DCRK), 1028 to 1083 (CVCN…GCGP), 1084 to 1131 (CNCN…ECRA), and 1132 to 1178 (CDCD…DCTP). Residue asparagine 1041 is glycosylated (N-linked (GlcNAc...) asparagine). Residues 1179 to 1397 (CHQCFALWDA…LDLSAVAQMT (219 aa)) are domain II. 4 N-linked (GlcNAc...) asparagine glycosylation sites follow: asparagine 1195, asparagine 1279, asparagine 1336, and asparagine 1343. Positions 1216 to 1315 (YRETVDSVEK…LEFIKNSDIQ (100 aa)) form a coiled coil. Positions 1368–1388 (KEQQEEQARLLDELAGKLQSL) form a coiled coil. The tract at residues 1398-1430 (CGTPPGADCSESECGGPNCRTDEGEKKCGGPGC) is domain alpha. Residues 1431–1786 (GGLVTVAHSA…EKVAVYSTCL (356 aa)) form a domain I region. A coiled-coil region spans residues 1448 to 1778 (DRDVLSALAE…RSLLKDISEK (331 aa)). The N-linked (GlcNAc...) asparagine glycan is linked to asparagine 1487. Phosphoserine is present on serine 1496. Residues asparagine 1542 and asparagine 1643 are each glycosylated (N-linked (GlcNAc...) asparagine). Serine 1666 bears the Phosphoserine mark.

In terms of assembly, laminin is a complex glycoprotein, consisting of three different polypeptide chains (alpha, beta, gamma), which are bound to each other by disulfide bonds into a cross-shaped molecule comprising one long and three short arms with globules at each end. Beta-1 is a subunit of laminin-1 (laminin-111 or EHS laminin), laminin-2 (laminin-211 or merosin), laminin-6 (laminin-311 or K-laminin), laminin-8 (laminin-411), laminin-10 (laminin-511) and laminin-12 (laminin-213). Interacts with ITGB1. In terms of tissue distribution, widely expressed in the embryo. High levels are detected in the cerebellar basement membrane, at postnatal day 7.

The protein resides in the secreted. Its subcellular location is the extracellular space. It localises to the extracellular matrix. The protein localises to the basement membrane. Functionally, binding to cells via a high affinity receptor, laminin is thought to mediate the attachment, migration and organization of cells into tissues during embryonic development by interacting with other extracellular matrix components. Involved in the organization of the laminar architecture of the cerebral cortex. It is probably required for the integrity of the basement membrane/glia limitans that serves as an anchor point for the endfeet of radial glial cells and as a physical barrier to migrating neurons. Radial glial cells play a central role in cerebral cortical development, where they act both as the proliferative unit of the cerebral cortex and a scaffold for neurons migrating toward the pial surface. The protein is Laminin subunit beta-1 (Lamb1) of Mus musculus (Mouse).